Consider the following 86-residue polypeptide: Small ribosomal subunit protein bS20 (86 aa).

Belongs to the bacterial ribosomal protein bS20 family.

Binds directly to 16S ribosomal RNA. This Paenarthrobacter aurescens (strain TC1) protein is Small ribosomal subunit protein bS20.